The primary structure comprises 213 residues: Pyridoxine/pyridoxamine 5'-phosphate oxidase (213 aa).

Residues 60-65 (RMVLMK), 75-76 (YS), Lys-82, and Gln-104 each bind FMN. Substrate is bound at residue Lys-65. Substrate-binding residues include Tyr-122 and Arg-126. FMN-binding positions include 139-140 (QS) and Trp-184. 190-192 (RLH) contacts substrate. Residue Arg-194 participates in FMN binding.

Belongs to the pyridoxamine 5'-phosphate oxidase family. As to quaternary structure, homodimer. It depends on FMN as a cofactor.

It carries out the reaction pyridoxamine 5'-phosphate + O2 + H2O = pyridoxal 5'-phosphate + H2O2 + NH4(+). It catalyses the reaction pyridoxine 5'-phosphate + O2 = pyridoxal 5'-phosphate + H2O2. It functions in the pathway cofactor metabolism; pyridoxal 5'-phosphate salvage; pyridoxal 5'-phosphate from pyridoxamine 5'-phosphate: step 1/1. The protein operates within cofactor metabolism; pyridoxal 5'-phosphate salvage; pyridoxal 5'-phosphate from pyridoxine 5'-phosphate: step 1/1. In terms of biological role, catalyzes the oxidation of either pyridoxine 5'-phosphate (PNP) or pyridoxamine 5'-phosphate (PMP) into pyridoxal 5'-phosphate (PLP). The protein is Pyridoxine/pyridoxamine 5'-phosphate oxidase of Nitrobacter winogradskyi (strain ATCC 25391 / DSM 10237 / CIP 104748 / NCIMB 11846 / Nb-255).